We begin with the raw amino-acid sequence, 979 residues long: Putative disease resistance protein RGA1 (979 aa).

The NB-ARC domain maps to 143–437 (GSVLTEPQVY…MAHGFLLSKG (295 aa)). 182–189 (GMGGLGKT) lines the ATP pocket. 12 LRR repeats span residues 524–547 (FVSL…IGDL), 549–570 (HLRY…RLCK), 571–594 (LQNL…QTSK), 595–619 (LGSL…GLLT), 637–661 (LGEL…KKDT), 748–773 (LPCL…VHPG), 823–841 (VKTL…SISN), 842–866 (LRAL…MFKS), 868–890 (ANLK…SLAS), 891–915 (LNAL…GVKG), 917–939 (TSLT…GLQH), and 940–965 (LTAL…IGED).

This sequence belongs to the disease resistance NB-LRR family.

Functionally, disease resistance protein. Resistance proteins guard the plant against pathogens that contain an appropriate avirulence protein via a direct or indirect interaction with this avirulence protein. That triggers a defense system which restricts the pathogen growth. This chain is Putative disease resistance protein RGA1 (RGA1), found in Solanum bulbocastanum (Wild potato).